The sequence spans 184 residues: Thymidine kinase (184 aa).

ATP contacts are provided by residues 10 to 17 and 83 to 86; these read GPMYSGKT and DEVQ. The active-site Proton acceptor is glutamate 84. Zn(2+)-binding residues include cysteine 140, cysteine 143, cysteine 173, and cysteine 176.

The protein belongs to the thymidine kinase family. Homotetramer.

It localises to the cytoplasm. It catalyses the reaction thymidine + ATP = dTMP + ADP + H(+). This chain is Thymidine kinase, found in Thermotoga petrophila (strain ATCC BAA-488 / DSM 13995 / JCM 10881 / RKU-1).